A 411-amino-acid polypeptide reads, in one-letter code: Lissencephaly-1 homolog (411 aa).

The 33-residue stretch at 9–41 (QREELNQAIADYLGSNGYADSLETFRKEADLST) folds into the LisH domain. Residues 56–83 (TSVIRLQKKVMELEAKLTEAEKEVIEGA) adopt a coiled-coil conformation. WD repeat units lie at residues 106 to 147 (GHRA…RSLK), 148 to 187 (GHTD…ECIK), 191 to 230 (GHDH…CVKT), 233 to 272 (GHRE…CKVE), 275 to 334 (DHEH…CLLT), 337 to 376 (GHDN…CMKT), and 379 to 411 (AHQH…WECR).

It belongs to the WD repeat LIS1/nudF family.

The protein resides in the cytoplasm. It localises to the cytoskeleton. Its subcellular location is the microtubule organizing center. The protein localises to the centrosome. Positively regulates the activity of the minus-end directed microtubule motor protein dynein. May enhance dynein-mediated microtubule sliding by targeting dynein to the microtubule plus end. Required for several dynein- and microtubule-dependent processes. This is Lissencephaly-1 homolog from Drosophila sechellia (Fruit fly).